The chain runs to 458 residues: Phosphoglucosamine mutase (458 aa).

S106 (phosphoserine intermediate) is an active-site residue. Mg(2+) contacts are provided by S106, D247, D249, and D251. S106 is modified (phosphoserine).

Belongs to the phosphohexose mutase family. It depends on Mg(2+) as a cofactor. Post-translationally, activated by phosphorylation.

The catalysed reaction is alpha-D-glucosamine 1-phosphate = D-glucosamine 6-phosphate. Functionally, catalyzes the conversion of glucosamine-6-phosphate to glucosamine-1-phosphate. This Chlamydia felis (strain Fe/C-56) (Chlamydophila felis) protein is Phosphoglucosamine mutase.